The chain runs to 516 residues: Leucine-rich repeat transmembrane neuronal protein 2 (516 aa).

The N-terminal stretch at 1-33 (MGLHFKWPLGAPMLAAIYAMSMVLKMLPALGMA) is a signal peptide. One can recognise an LRRNT domain in the interval 34-61 (CPPKCRCEKLLFYCDSQGFHSVPNATDK). Over 34 to 422 (CPPKCRCEKL…EPDNAIFTQR (389 aa)) the chain is Extracellular. A glycan (N-linked (GlcNAc...) asparagine) is linked at N57. LRR repeat units lie at residues 63–83 (SLGLSLRHNHITELERDQFAS), 86–107 (QLTWLHLDHNQISTVKEDAFQG), 110–131 (KLKELILSSNKIFYLPNTTFTQ), 134–155 (NLQNLDLSFNQLSSLHPELFYG), 158–179 (KLQTLHLRSNSLRTIPVRLFWD), 182–203 (SLEFLDLSTNRLRSLARNGFAG), 206–227 (KLRELHLEHNQLTKINFAHFLR), 230–251 (SLHTLFLQWNKISNLTCGMEWT), 254–275 (TLEKLDLTGNEIKAIDLTVFET), and 278–299 (NLKILLMDNNKLNSLDSKILNS). A glycan (N-linked (GlcNAc...) asparagine) is linked at N126. N243 carries an N-linked (GlcNAc...) asparagine glycan. The LRRCT domain occupies 311–362 (NLWECSARICALASWLGSFQGRWEHSILCHSPDHTQGEDILDAVHGFQLCWN). N362 carries N-linked (GlcNAc...) asparagine glycosylation. A helical transmembrane segment spans residues 423-443 (VITGTMALLFSFFFIIFIVFI). The Cytoplasmic portion of the chain corresponds to 444-516 (SRKCCPPTLR…QQLPYKECEV (73 aa)). Residues 513 to 516 (ECEV) carry the Involved in DLG4-binding motif.

Belongs to the LRRTM family. In terms of assembly, interacts with DLG4. Interacts with neurexin NRXN1; interaction is mediated by heparan sulfate glycan modification on neurexin. As to expression, expressed in neuronal tissues.

It is found in the cell membrane. Its subcellular location is the postsynaptic cell membrane. Its function is as follows. Involved in the development and maintenance of excitatory synapses in the vertebrate nervous system. Regulates surface expression of AMPA receptors and instructs the development of functional glutamate release sites. Acts as a ligand for the presynaptic receptors NRXN1-A and NRXN1-B. The protein is Leucine-rich repeat transmembrane neuronal protein 2 (LRRTM2) of Homo sapiens (Human).